The chain runs to 151 residues: Leukocyte cell-derived chemotaxin-2 (151 aa).

The signal sequence occupies residues 1–18; it reads MIPTTILISAALLSSALA. 3 disulfide bridges follow: Cys25–Cys60, Cys36–Cys41, and Cys99–Cys142. Residues His53, Asp57, and His138 each coordinate Zn(2+).

This sequence belongs to the LECT2/MIM-1 family. Highly expressed in liver and weakly in testis. Not expressed in heart, brain, spleen, lung, skeletal muscle and kidney.

The protein localises to the secreted. Its function is as follows. Has a neutrophil chemotactic activity. Also a positive regulator of chondrocyte proliferation. The polypeptide is Leukocyte cell-derived chemotaxin-2 (Lect2) (Mus musculus (Mouse)).